The chain runs to 882 residues: Pentatricopeptide repeat-containing protein At3g03580 (882 aa).

PPR repeat units lie at residues 3-37 (TRVS…GLDS), 38-68 (SDFF…VSPA), 70-104 (NVYL…KVSP), 105-139 (DKYT…GFES), 140-170 (DLFV…MPVR), 171-205 (DLVS…WIVP), 206-240 (DSFT…GVNS), 241-271 (VVVV…MDVR), 272-307 (DSVS…KPDL), 309-340 (TVSS…GFVL), 341-371 (ESTV…MECK), 372-406 (DTVS…EEQA), 407-441 (DHIT…GICI), 442-472 (DLSV…MGTG), 473-507 (DTVT…EVVP), 508-542 (DMAT…GYES), 543-573 (ELQI…MSRR), 574-608 (DVVT…GIVP), 609-639 (DSVV…MKTH), and 645-675 (MIEH…MPIK). Positions 680-755 (IWASVLRACR…NPGYSWIEVG (76 aa)) are type E motif. Residues 756-786 (KNVHVFSSGDDSAPQSEAIYKSLEILYSLMA) form a type E(+) motif region. The type DYW motif stretch occupies residues 787 to 882 (KEGYIPDPRE…DGTCSCKDRW (96 aa)).

This sequence belongs to the PPR family. PCMP-H subfamily.

In Arabidopsis thaliana (Mouse-ear cress), this protein is Pentatricopeptide repeat-containing protein At3g03580 (PCMP-H23).